The sequence spans 695 residues: Centrosomal protein kizuna (695 aa).

Positions 1–12 are enriched in gly residues; sequence MPRGRGGGGGGL. Positions 1 to 24 are disordered; it reads MPRGRGGGGGGLRQASATSAPLAS. Residues 15–24 show a composition bias toward low complexity; that stretch reads ASATSAPLAS. 2 coiled-coil regions span residues 29-57 and 102-132; these read ERVG…EYNK and VEHL…LSKD. Disordered stretches follow at residues 261 to 313, 351 to 391, 444 to 465, and 633 to 695; these read EIGS…SDRE, HSAW…SDLT, QSFP…EKVP, and SEAS…FYDT. 2 stretches are compositionally biased toward polar residues: residues 263–274 and 282–297; these read GSSTQHSKSNLS and LHSS…NSIT. Composition is skewed to basic and acidic residues over residues 299 to 313 and 360 to 377; these read LKCD…SDRE and DLDH…KHEE. Residues 382–391 show a composition bias toward low complexity; it reads GSSCSSSDLT. A Phosphothreonine; by PLK1 modification is found at T391. The segment covering 448–465 has biased composition (basic and acidic residues); it reads DSKREPSPDSPRQPEKVP. Low complexity predominate over residues 633–645; the sequence is SEASFSSSEGSPL. S667, S670, and S672 each carry phosphoserine. A compositionally biased stretch (basic and acidic residues) spans 676 to 686; it reads AALRPRDHDMP.

The protein belongs to the kizuna family. As to quaternary structure, interacts with AKAP9, CEP72, ODF2, PCNT and TUBGCP2. In terms of processing, phosphorylation at Thr-391 by PLK1 is not needed for centrosomal localization or pericentriolar material expansion but is indispensable for spindle-pole stabilization.

It localises to the cytoplasm. The protein localises to the cytoskeleton. The protein resides in the microtubule organizing center. Its subcellular location is the centrosome. It is found in the cilium basal body. Functionally, centrosomal protein required for establishing a robust mitotic centrosome architecture that can endure the forces that converge on the centrosomes during spindle formation. Required for stabilizing the expanded pericentriolar material around the centriole. This Mus musculus (Mouse) protein is Centrosomal protein kizuna (Kiz).